We begin with the raw amino-acid sequence, 483 residues long: MKTLNRRDFPGAQYPERIIQFGEGNFLRAFVDWQIDLLNEHTDLNSGVVVVRPIETSFPPSLSTQDGLYTTIIRGLNEKGEAVSDARLIRSVNREISVYSEYDEFLKLAHNPEMRFVFSNTTEAGISYHAGDKFDDAPAVSYPAKLTRLLFERFSHFNGALDKGWIIIPCELIDYNGDALRELVLRYAQEWALPEAFIQWLDQANSFCSTLVDRIVTGYPRDEVAKLEEELGYHDGFLDTAEHFYLFVIQGPKSLATELRLDKYPLNVLIVDDIKPYKERKVAILNGAHTALVPVAFQAGLDTVGEAMNDAEICAFVEKAIYEEIIPVLDLPRDELESFASAVTGRFRNPYIKHQLLSIALNGMTKFRTRILPQLLAGQKAKGTLPARLTFALAALIAFYRGERNGETYPVQDDAHWLERYQQLWSQHRDRVIGTQELVAIVLAEKDHWEQDLTQVPGLVEQVANDLDAILEKGMREAVRPLC.

18–29 (IIQFGEGNFLRA) provides a ligand contact to NAD(+).

Belongs to the mannitol dehydrogenase family. UxaB subfamily.

It catalyses the reaction D-altronate + NAD(+) = keto-D-tagaturonate + NADH + H(+). Its pathway is carbohydrate metabolism; pentose and glucuronate interconversion. This is Altronate oxidoreductase from Escherichia coli (strain 55989 / EAEC).